A 529-amino-acid chain; its full sequence is Bifunctional purine biosynthesis protein PurH (529 aa).

The MGS-like domain occupies 1 to 148 (MQQRRPVRRA…KNHKDVAIVV (148 aa)). Position 287 is an N6-acetyllysine (Lys287).

This sequence belongs to the PurH family.

The catalysed reaction is (6R)-10-formyltetrahydrofolate + 5-amino-1-(5-phospho-beta-D-ribosyl)imidazole-4-carboxamide = 5-formamido-1-(5-phospho-D-ribosyl)imidazole-4-carboxamide + (6S)-5,6,7,8-tetrahydrofolate. It carries out the reaction IMP + H2O = 5-formamido-1-(5-phospho-D-ribosyl)imidazole-4-carboxamide. The protein operates within purine metabolism; IMP biosynthesis via de novo pathway; 5-formamido-1-(5-phospho-D-ribosyl)imidazole-4-carboxamide from 5-amino-1-(5-phospho-D-ribosyl)imidazole-4-carboxamide (10-formyl THF route): step 1/1. Its pathway is purine metabolism; IMP biosynthesis via de novo pathway; IMP from 5-formamido-1-(5-phospho-D-ribosyl)imidazole-4-carboxamide: step 1/1. This chain is Bifunctional purine biosynthesis protein PurH, found in Escherichia coli O127:H6 (strain E2348/69 / EPEC).